We begin with the raw amino-acid sequence, 380 residues long: Lipid-A-disaccharide synthase (380 aa).

Belongs to the LpxB family.

The catalysed reaction is a lipid X + a UDP-2-N,3-O-bis[(3R)-3-hydroxyacyl]-alpha-D-glucosamine = a lipid A disaccharide + UDP + H(+). The protein operates within bacterial outer membrane biogenesis; LPS lipid A biosynthesis. Functionally, condensation of UDP-2,3-diacylglucosamine and 2,3-diacylglucosamine-1-phosphate to form lipid A disaccharide, a precursor of lipid A, a phosphorylated glycolipid that anchors the lipopolysaccharide to the outer membrane of the cell. The chain is Lipid-A-disaccharide synthase from Rickettsia typhi (strain ATCC VR-144 / Wilmington).